Consider the following 244-residue polypeptide: EEF1A lysine methyltransferase 2 (244 aa).

The segment at 1-27 (MNADAEGHSGAVVPAQSPEGSSAADDF) is disordered. At Ser-21 the chain carries Phosphoserine.

It belongs to the class I-like SAM-binding methyltransferase superfamily. EFM4 family.

It is found in the cytoplasm. The protein localises to the nucleus. It catalyses the reaction L-lysyl-[protein] + 3 S-adenosyl-L-methionine = N(6),N(6),N(6)-trimethyl-L-lysyl-[protein] + 3 S-adenosyl-L-homocysteine + 3 H(+). In terms of biological role, protein-lysine methyltransferase that selectively catalyzes the trimethylation of EEF1A at 'Lys-318'. This is EEF1A lysine methyltransferase 2 from Mus musculus (Mouse).